The following is a 356-amino-acid chain: Protein RecA (356 aa).

An ATP-binding site is contributed by 68–75 (GQESSGKT).

This sequence belongs to the RecA family.

It localises to the cytoplasm. Its function is as follows. Can catalyze the hydrolysis of ATP in the presence of single-stranded DNA, the ATP-dependent uptake of single-stranded DNA by duplex DNA, and the ATP-dependent hybridization of homologous single-stranded DNAs. It interacts with LexA causing its activation and leading to its autocatalytic cleavage. This chain is Protein RecA, found in Thermotoga maritima (strain ATCC 43589 / DSM 3109 / JCM 10099 / NBRC 100826 / MSB8).